The following is a 263-amino-acid chain: 5'-nucleotidase SurE (263 aa).

The a divalent metal cation site is built by D8, D9, S43, and N96.

This sequence belongs to the SurE nucleotidase family. Requires a divalent metal cation as cofactor.

It localises to the cytoplasm. The catalysed reaction is a ribonucleoside 5'-phosphate + H2O = a ribonucleoside + phosphate. Its function is as follows. Nucleotidase that shows phosphatase activity on nucleoside 5'-monophosphates. The polypeptide is 5'-nucleotidase SurE (Jannaschia sp. (strain CCS1)).